Reading from the N-terminus, the 92-residue chain is DNA/RNA-binding protein Alba (92 aa).

The residue at position 11 (K11) is an N6-acetyllysine.

Belongs to the histone-like Alba family. Acetylated. Acetylation at Lys-11 decreases DNA-binding affinity.

The protein resides in the cytoplasm. Its subcellular location is the chromosome. Functionally, binds double-stranded DNA tightly but without sequence specificity. Involved in DNA compaction. The sequence is that of DNA/RNA-binding protein Alba from Pyrobaculum islandicum (strain DSM 4184 / JCM 9189 / GEO3).